The following is a 473-amino-acid chain: Photosystem II CP43 reaction center protein (473 aa).

Residues 1 to 14 (MKTLYSLRRFYPVE) constitute a propeptide that is removed on maturation. Thr15 carries the post-translational modification N-acetylthreonine. Thr15 carries the post-translational modification Phosphothreonine. A run of 5 helical transmembrane segments spans residues 69–93 (LFEV…PHLA), 134–155 (LLGP…KDRN), 178–200 (KALY…RKIT), 255–275 (KPFA…LSYS), and 291–312 (WFNN…ASQA). Glu367 serves as a coordination point for [CaMn4O5] cluster. Residues 447–471 (RARAAAAGFEKGIDRDFEPALSMTP) traverse the membrane as a helical segment.

Belongs to the PsbB/PsbC family. PsbC subfamily. PSII is composed of 1 copy each of membrane proteins PsbA, PsbB, PsbC, PsbD, PsbE, PsbF, PsbH, PsbI, PsbJ, PsbK, PsbL, PsbM, PsbT, PsbX, PsbY, PsbZ, Psb30/Ycf12, at least 3 peripheral proteins of the oxygen-evolving complex and a large number of cofactors. It forms dimeric complexes. Binds multiple chlorophylls and provides some of the ligands for the Ca-4Mn-5O cluster of the oxygen-evolving complex. It may also provide a ligand for a Cl- that is required for oxygen evolution. PSII binds additional chlorophylls, carotenoids and specific lipids. is required as a cofactor.

It localises to the plastid. It is found in the chloroplast thylakoid membrane. One of the components of the core complex of photosystem II (PSII). It binds chlorophyll and helps catalyze the primary light-induced photochemical processes of PSII. PSII is a light-driven water:plastoquinone oxidoreductase, using light energy to abstract electrons from H(2)O, generating O(2) and a proton gradient subsequently used for ATP formation. This is Photosystem II CP43 reaction center protein from Oenothera argillicola (Appalachian evening primrose).